Reading from the N-terminus, the 853-residue chain is Dynamin-A (853 aa).

Residues 22-296 enclose the Dynamin-type G domain; it reads PLDLPQIVVV…LMFHIRDTLP (275 aa). The interval 32–39 is G1 motif; the sequence is GSQSSGKS. A GTP-binding site is contributed by 32-40; that stretch reads GSQSSGKSS. Positions 58 to 60 are G2 motif; it reads VTR. The segment at 138 to 141 is G3 motif; that stretch reads DLPG. The tract at residues 207–210 is G4 motif; the sequence is TKLD. GTP contacts are provided by residues 207–213 and 238–241; these read TKLDLMD and NRSQ. A G5 motif region spans residues 237–240; it reads INRS. 2 stretches are compositionally biased toward low complexity: residues 523-569 and 590-607; these read DQYQ…QQNQ and PAQQQPNQQPNQLNKGPQ. A disordered region spans residues 523–738; it reads DQYQQQQQQQ…RYQDDFYGRG (216 aa). Polar residues predominate over residues 610 to 624; the sequence is PPNQSKPSSIPQNGP. Low complexity-rich tracts occupy residues 625-635 and 664-728; these read NNNNNNNNNNN and NNSN…SSYN. The GED domain maps to 762 to 853; it reads TELIRELLIS…IINEIRDFRN (92 aa).

It belongs to the TRAFAC class dynamin-like GTPase superfamily. Dynamin/Fzo/YdjA family.

The protein localises to the cytoplasm. In terms of biological role, function in membrane trafficking processes along the endo-lysosomal pathway. In Dictyostelium discoideum (Social amoeba), this protein is Dynamin-A (dymA).